The primary structure comprises 681 residues: uncharacterized protein (681 aa).

This sequence belongs to the protein kinase superfamily. ADCK protein kinase family.

This is an uncharacterized protein from Synechocystis sp. (strain ATCC 27184 / PCC 6803 / Kazusa).